The primary structure comprises 144 residues: MKLNTLSPAAGAKSAAKRVGRGIGSGLGKTAGRGHKGQKSRSGGGVRVGFEGGQMPLKIRLPKFGFTSRKAMVTAEIRVSELAKVNGDVVDLNALKDANLVTRNIQFAKVVLSGTIERPVTVKGLKVTKGARAAIEAAGGKIEE.

The disordered stretch occupies residues 1–49; sequence MKLNTLSPAAGAKSAAKRVGRGIGSGLGKTAGRGHKGQKSRSGGGVRVG. Gly residues predominate over residues 21-31; sequence RGIGSGLGKTA.

Belongs to the universal ribosomal protein uL15 family. Part of the 50S ribosomal subunit.

Binds to the 23S rRNA. The polypeptide is Large ribosomal subunit protein uL15 (Shewanella loihica (strain ATCC BAA-1088 / PV-4)).